The primary structure comprises 89 residues: Small ribosomal subunit protein uS14 (89 aa).

The protein belongs to the universal ribosomal protein uS14 family. Part of the 30S ribosomal subunit. Contacts proteins S3 and S10.

Binds 16S rRNA, required for the assembly of 30S particles and may also be responsible for determining the conformation of the 16S rRNA at the A site. This is Small ribosomal subunit protein uS14 from Parabacteroides distasonis (strain ATCC 8503 / DSM 20701 / CIP 104284 / JCM 5825 / NCTC 11152).